The chain runs to 505 residues: Cyclin-dependent kinase C-1 (505 aa).

One can recognise a Protein kinase domain in the interval F26 to F325. ATP is bound by residues I32–V40 and K55. A Phosphotyrosine modification is found at Y37. D164 serves as the catalytic Proton acceptor. The residue at position 198 (T198) is a Phosphothreonine. A disordered region spans residues S336 to Q505. Residues P429–G456 show a composition bias toward low complexity. Residues G482–G491 are compositionally biased toward gly residues. Over residues R492–Q505 the composition is skewed to low complexity.

The protein belongs to the protein kinase superfamily. CMGC Ser/Thr protein kinase family. CDC2/CDKX subfamily. In terms of assembly, interacts with CYCT1-3. Highly expressed in flowers. Expressed in seedlings, roots, rosettes and stems.

It catalyses the reaction L-seryl-[protein] + ATP = O-phospho-L-seryl-[protein] + ADP + H(+). It carries out the reaction L-threonyl-[protein] + ATP = O-phospho-L-threonyl-[protein] + ADP + H(+). The enzyme catalyses [DNA-directed RNA polymerase] + ATP = phospho-[DNA-directed RNA polymerase] + ADP + H(+). In Arabidopsis thaliana (Mouse-ear cress), this protein is Cyclin-dependent kinase C-1 (CDKC-1).